Consider the following 363-residue polypeptide: Oxygen-dependent coproporphyrinogen-III oxidase (363 aa).

Residue serine 119 participates in substrate binding. A divalent metal cation-binding residues include histidine 123 and histidine 133. The active-site Proton donor is the histidine 133. 135 to 137 (NYR) serves as a coordination point for substrate. Histidine 167 and histidine 197 together coordinate a divalent metal cation. Residues 287 to 322 (YVEFNLVWDRGTIFGLQTNGRTESILMSLPPLVRWE) are important for dimerization.

The protein belongs to the aerobic coproporphyrinogen-III oxidase family. As to quaternary structure, homodimer. It depends on a divalent metal cation as a cofactor.

The protein localises to the cytoplasm. It catalyses the reaction coproporphyrinogen III + O2 + 2 H(+) = protoporphyrinogen IX + 2 CO2 + 2 H2O. The protein operates within porphyrin-containing compound metabolism; protoporphyrin-IX biosynthesis; protoporphyrinogen-IX from coproporphyrinogen-III (O2 route): step 1/1. Its function is as follows. Involved in the heme and chlorophyll biosynthesis. Catalyzes the aerobic oxidative decarboxylation of propionate groups of rings A and B of coproporphyrinogen-III to yield the vinyl groups in protoporphyrinogen-IX. The sequence is that of Oxygen-dependent coproporphyrinogen-III oxidase from Parasynechococcus marenigrum (strain WH8102).